The chain runs to 156 residues: Small ribosomal subunit protein uS7 (156 aa).

This sequence belongs to the universal ribosomal protein uS7 family. Part of the 30S ribosomal subunit. Contacts proteins S9 and S11.

Its function is as follows. One of the primary rRNA binding proteins, it binds directly to 16S rRNA where it nucleates assembly of the head domain of the 30S subunit. Is located at the subunit interface close to the decoding center, probably blocks exit of the E-site tRNA. The sequence is that of Small ribosomal subunit protein uS7 from Acidithiobacillus ferrooxidans (strain ATCC 53993 / BNL-5-31) (Leptospirillum ferrooxidans (ATCC 53993)).